The following is a 321-amino-acid chain: Lipoyl synthase (321 aa).

[4Fe-4S] cluster-binding residues include cysteine 68, cysteine 73, cysteine 79, cysteine 94, cysteine 98, cysteine 101, and serine 308. Residues phenylalanine 80–threonine 297 form the Radical SAM core domain.

Belongs to the radical SAM superfamily. Lipoyl synthase family. The cofactor is [4Fe-4S] cluster.

It localises to the cytoplasm. The enzyme catalyses [[Fe-S] cluster scaffold protein carrying a second [4Fe-4S](2+) cluster] + N(6)-octanoyl-L-lysyl-[protein] + 2 oxidized [2Fe-2S]-[ferredoxin] + 2 S-adenosyl-L-methionine + 4 H(+) = [[Fe-S] cluster scaffold protein] + N(6)-[(R)-dihydrolipoyl]-L-lysyl-[protein] + 4 Fe(3+) + 2 hydrogen sulfide + 2 5'-deoxyadenosine + 2 L-methionine + 2 reduced [2Fe-2S]-[ferredoxin]. It functions in the pathway protein modification; protein lipoylation via endogenous pathway; protein N(6)-(lipoyl)lysine from octanoyl-[acyl-carrier-protein]: step 2/2. Functionally, catalyzes the radical-mediated insertion of two sulfur atoms into the C-6 and C-8 positions of the octanoyl moiety bound to the lipoyl domains of lipoate-dependent enzymes, thereby converting the octanoylated domains into lipoylated derivatives. This chain is Lipoyl synthase, found in Vibrio vulnificus (strain CMCP6).